A 347-amino-acid chain; its full sequence is Heat-inducible transcription repressor HrcA (347 aa).

This sequence belongs to the HrcA family.

Functionally, negative regulator of class I heat shock genes (grpE-dnaK-dnaJ and groELS operons). Prevents heat-shock induction of these operons. This chain is Heat-inducible transcription repressor HrcA, found in Desulforamulus reducens (strain ATCC BAA-1160 / DSM 100696 / MI-1) (Desulfotomaculum reducens).